The following is a 723-amino-acid chain: ESX-1 secretion-associated protein EspK (723 aa).

2 disordered regions span residues 175-360 and 393-451; these read DLLQ…TPAA and SGAG…GTPV. Positions 200-209 are enriched in low complexity; that stretch reads TPGTPITPGT. The span at 210-229 shows a compositional bias: pro residues; the sequence is PITPIPGAPVTPITPTPGTP. A compositionally biased stretch (low complexity) spans 230-249; the sequence is VTPVTPGKPVTPVTPVKPGT. 2 stretches are compositionally biased toward pro residues: residues 250 to 265 and 274 to 308; these read PGEP…PVAP and PVTP…PSGP. Composition is skewed to low complexity over residues 309-319, 393-404, and 412-426; these read ATPGTPGGEPA, SGAGSHAATGRA, and AAAP…RTAP. Basic and acidic residues predominate over residues 432 to 444; it reads STDHIDKPDRSES.

Its subcellular location is the cytoplasm. May act as a chaperone that facilitates EspB secretion through an interaction with EccCb1. The protein is ESX-1 secretion-associated protein EspK of Mycobacterium tuberculosis (strain CDC 1551 / Oshkosh).